We begin with the raw amino-acid sequence, 432 residues long: Adenylosuccinate synthetase (432 aa).

GTP is bound by residues 12-18 (GDEGKGK) and 40-42 (GHT). The active-site Proton acceptor is aspartate 13. Mg(2+) is bound by residues aspartate 13 and glycine 40. Residues 13–16 (DEGK), 38–41 (NAGH), threonine 132, arginine 146, glutamine 226, threonine 241, and arginine 305 contribute to the IMP site. The active-site Proton donor is the histidine 41. Residue 301-307 (VVTGRKR) coordinates substrate. GTP contacts are provided by residues arginine 307, 333–335 (KLD), and 415–417 (STS).

The protein belongs to the adenylosuccinate synthetase family. As to quaternary structure, homodimer. Mg(2+) serves as cofactor.

Its subcellular location is the cytoplasm. The enzyme catalyses IMP + L-aspartate + GTP = N(6)-(1,2-dicarboxyethyl)-AMP + GDP + phosphate + 2 H(+). It functions in the pathway purine metabolism; AMP biosynthesis via de novo pathway; AMP from IMP: step 1/2. In terms of biological role, plays an important role in the de novo pathway of purine nucleotide biosynthesis. Catalyzes the first committed step in the biosynthesis of AMP from IMP. The chain is Adenylosuccinate synthetase from Rhizobium johnstonii (strain DSM 114642 / LMG 32736 / 3841) (Rhizobium leguminosarum bv. viciae).